A 312-amino-acid chain; its full sequence is Malate dehydrogenase (312 aa).

NAD(+)-binding positions include 7-13 (GAAGGIG) and Asp-34. Residues Arg-81 and Arg-87 each contribute to the substrate site. Residues Asn-94 and 117–119 (ITN) each bind NAD(+). The substrate site is built by Asn-119 and Arg-153. The active-site Proton acceptor is the His-177. Met-227 serves as a coordination point for NAD(+).

It belongs to the LDH/MDH superfamily. MDH type 1 family. Homodimer.

The enzyme catalyses (S)-malate + NAD(+) = oxaloacetate + NADH + H(+). Catalyzes the reversible oxidation of malate to oxaloacetate. The protein is Malate dehydrogenase of Escherichia coli (strain ATCC 8739 / DSM 1576 / NBRC 3972 / NCIMB 8545 / WDCM 00012 / Crooks).